We begin with the raw amino-acid sequence, 559 residues long: Glycerol kinase (559 aa).

Thr-20 is an ADP binding site. The ATP site is built by Thr-20, Ser-21, and Ser-22. Residue Thr-20 coordinates sn-glycerol 3-phosphate. ADP is bound at residue Arg-24. 3 residues coordinate sn-glycerol 3-phosphate: Arg-94, Glu-95, and Tyr-148. Glycerol-binding residues include Arg-94, Glu-95, and Tyr-148. Gly-252 contributes to the beta-D-fructose 1,6-bisphosphate binding site. Asp-265 lines the sn-glycerol 3-phosphate pocket. The glycerol site is built by Asp-265 and Gln-266. ADP contacts are provided by Thr-287, Gly-332, Gly-433, and Asn-437. ATP-binding residues include Thr-287, Gly-332, and Gly-433. A Zn(2+)-binding site is contributed by Glu-501. Residues 532–552 (IFCSLPLGFFIVSSMVMLIGA) traverse the membrane as a helical segment.

Belongs to the FGGY kinase family.

The protein localises to the mitochondrion outer membrane. The protein resides in the nucleus. It is found in the cytoplasm. Its subcellular location is the cytosol. The enzyme catalyses glycerol + ATP = sn-glycerol 3-phosphate + ADP + H(+). The protein operates within polyol metabolism; glycerol degradation via glycerol kinase pathway; sn-glycerol 3-phosphate from glycerol: step 1/1. Kinase that plays a key role in glycerol metabolism, catalyzing its phosphorylation to produce sn-glycerol 3-phosphate. Sn-glycerol 3-phosphate is a crucial intermediate in various metabolic pathways, such as the synthesis of glycerolipids and triglycerides, glycogenesis, glycolysis and gluconeogenesis. This chain is Glycerol kinase, found in Rattus norvegicus (Rat).